Here is a 214-residue protein sequence, read N- to C-terminus: Adenylate kinase (214 aa).

Position 10-15 (10-15 (GAGKGT)) interacts with ATP. Residues 30–59 (STGDMFREEISAKSELGRKVEDILKRGELV) form an NMP region. AMP-binding positions include Thr-31, Arg-36, 57–59 (ELV), 85–88 (GYPR), and Gln-92. An LID region spans residues 126–163 (NRRICKNCGKIYNLITLPPKINGKCDVCGGELYQREDD). Arg-127 provides a ligand contact to ATP. Residues Cys-130 and Cys-133 each coordinate Zn(2+). Residue 136–137 (IY) coordinates ATP. 2 residues coordinate Zn(2+): Cys-150 and Cys-153. Residues Arg-160 and Arg-171 each coordinate AMP. Residue Met-199 coordinates ATP.

It belongs to the adenylate kinase family. Monomer.

The protein resides in the cytoplasm. It carries out the reaction AMP + ATP = 2 ADP. The protein operates within purine metabolism; AMP biosynthesis via salvage pathway; AMP from ADP: step 1/1. Functionally, catalyzes the reversible transfer of the terminal phosphate group between ATP and AMP. Plays an important role in cellular energy homeostasis and in adenine nucleotide metabolism. This is Adenylate kinase from Thermosipho melanesiensis (strain DSM 12029 / CIP 104789 / BI429).